The sequence spans 802 residues: Elongation factor G, mitochondrial (802 aa).

The transit peptide at 1–24 (MRYPSLARLPRRALSGLARAPVRL) directs the protein to the mitochondrion. Residues 100–387 (SRVRNIGIAA…GVIDYLPNPS (288 aa)) enclose the tr-type G domain. GTP is bound by residues 109 to 116 (AHIDSGKT), 185 to 189 (DTPGH), and 239 to 242 (NKMD).

This sequence belongs to the TRAFAC class translation factor GTPase superfamily. Classic translation factor GTPase family. EF-G/EF-2 subfamily.

Its subcellular location is the mitochondrion. It participates in protein biosynthesis; polypeptide chain elongation. In terms of biological role, mitochondrial GTPase that catalyzes the GTP-dependent ribosomal translocation step during translation elongation. During this step, the ribosome changes from the pre-translocational (PRE) to the post-translocational (POST) state as the newly formed A-site-bound peptidyl-tRNA and P-site-bound deacylated tRNA move to the P and E sites, respectively. Catalyzes the coordinated movement of the two tRNA molecules, the mRNA and conformational changes in the ribosome. The polypeptide is Elongation factor G, mitochondrial (mef1) (Aspergillus terreus (strain NIH 2624 / FGSC A1156)).